Consider the following 54-residue polypeptide: MSPQTETKASVGFKAGVKDYKLTYYTPDYVTKDTDILAAFRVSPQPGVPPEEAG.

Positions 1–2 (MS) are excised as a propeptide. The residue at position 3 (Pro-3) is an N-acetylproline. Position 14 is an N6,N6,N6-trimethyllysine (Lys-14).

Belongs to the RuBisCO large chain family. Type I subfamily. Heterohexadecamer of 8 large chains and 8 small chains.

Its subcellular location is the plastid. It localises to the chloroplast. The catalysed reaction is 2 (2R)-3-phosphoglycerate + 2 H(+) = D-ribulose 1,5-bisphosphate + CO2 + H2O. It carries out the reaction D-ribulose 1,5-bisphosphate + O2 = 2-phosphoglycolate + (2R)-3-phosphoglycerate + 2 H(+). RuBisCO catalyzes two reactions: the carboxylation of D-ribulose 1,5-bisphosphate, the primary event in carbon dioxide fixation, as well as the oxidative fragmentation of the pentose substrate in the photorespiration process. Both reactions occur simultaneously and in competition at the same active site. This Ilex aquifolium (English holly) protein is Ribulose bisphosphate carboxylase large chain (rbcL).